Consider the following 873-residue polypeptide: Zinc fingers and homeoboxes protein 1 (873 aa).

Residues 24-63 are disordered; the sequence is LISDLDEGPPVLTPVENTRAESISSDEEVHESVDSDNQQN. At T36 the chain carries Phosphothreonine. A phosphoserine mark is found at S45, S47, and S48. 2 consecutive C2H2-type zinc fingers follow at residues 70–93 and 102–125; these read YECK…DSEH and YVCV…LKYH. A Glycyl lysine isopeptide (Lys-Gly) (interchain with G-Cter in SUMO2) cross-link involves residue K159. Residues 200 to 236 form a disordered region; that stretch reads HNSVEDVPEEKENEIKPDREEIVENPSSSASESNTST. S202 bears the Phosphoserine mark. Residues 212–221 show a composition bias toward basic and acidic residues; that stretch reads NEIKPDREEI. Residues 223–236 show a composition bias toward low complexity; sequence ENPSSSASESNTST. The segment at 272-432 is required for dimerization; it reads NSNLIPKVLI…QNNIQKSQVP (161 aa). Residues 272–564 form a required for interaction with NFYA region; the sequence is NSNLIPKVLI…AQPKQSWNPF (293 aa). A DNA-binding region (homeobox 1) is located at residues 284–346; that stretch reads NSIPTYNAAL…LKHGVSWTPE (63 aa). Residues K441, K454, K485, and K629 each participate in a glycyl lysine isopeptide (Lys-Gly) (interchain with G-Cter in SUMO2) cross-link. DNA-binding regions (homeobox) lie at residues 464 to 526 and 569 to 630; these read SFGI…KSNQ and PQKF…EEKM. Disordered stretches follow at residues 626–667 and 732–769; these read KEEK…ICKK and SSMN…INNW. Phosphoserine is present on S648. The homeobox 4 DNA-binding region spans 660 to 722; the sequence is STGKICKKTP…YAWKNGNLKW (63 aa). The segment at 734 to 768 is required for nuclear localization; that stretch reads MNGLSSLRKRGRGRPKGRGRGRPRGRPRGSKRINN. A compositionally biased stretch (basic residues) spans 740 to 764; it reads LRKRGRGRPKGRGRGRPRGRPRGSK. S774 carries the post-translational modification Phosphoserine. Positions 777-832 form a DNA-binding region, homeobox 5; the sequence is KFKTGTAILKDYYLKHKFLNEQDLDELVNKSHMGYEQVREWFAERQRRSELGIELF. The disordered stretch occupies residues 829–873; that stretch reads IELFEENEEEDEVIDDQEEDEEETDDSDTWEPPRHVKRKLSKSDD. The segment covering 831–857 has biased composition (acidic residues); that stretch reads LFEENEEEDEVIDDQEEDEEETDDSDT. The segment at 831–873 is required for repressor activity; that stretch reads LFEENEEEDEVIDDQEEDEEETDDSDTWEPPRHVKRKLSKSDD. Positions 863–873 are enriched in basic residues; that stretch reads HVKRKLSKSDD.

This sequence belongs to the ZHX family. As to quaternary structure, forms homodimers. Heterodimer (via HD1 domain) with ZHX2 (via HD1 domain). Also forms a heterodimer with ZHX3 which is a prerequisite for repressor activity. Interacts with ATF7IP and NFYA. Interacts (via homeobox domains) with DNMT3B (via PWWP domain).

The protein localises to the nucleus. Acts as a transcriptional repressor. Increases DNMT3B-mediated repressive transcriptional activity when DNMT3B is tethered to DNA. May link molecule between DNMT3B and other co-repressor proteins. The polypeptide is Zinc fingers and homeoboxes protein 1 (ZHX1) (Pan troglodytes (Chimpanzee)).